Consider the following 383-residue polypeptide: Deoxyguanosinetriphosphate triphosphohydrolase-like protein (383 aa).

The 137-residue stretch at 62–198 (RLTHSLEVST…AALADDISYI (137 aa)) folds into the HD domain.

It belongs to the dGTPase family. Type 2 subfamily.

The sequence is that of Deoxyguanosinetriphosphate triphosphohydrolase-like protein from Rickettsia bellii (strain RML369-C).